Reading from the N-terminus, the 155-residue chain is Ribosome maturation factor RimP (155 aa).

This sequence belongs to the RimP family.

The protein localises to the cytoplasm. Its function is as follows. Required for maturation of 30S ribosomal subunits. This Salinibacter ruber (strain DSM 13855 / M31) protein is Ribosome maturation factor RimP.